The sequence spans 427 residues: Adenylosuccinate synthetase (427 aa).

GTP-binding positions include 12–18 (GDEGKGK) and 40–42 (GHT). Catalysis depends on aspartate 13, which acts as the Proton acceptor. Mg(2+) is bound by residues aspartate 13 and glycine 40. IMP is bound by residues 13–16 (DEGK), 38–41 (NAGH), threonine 128, arginine 142, glutamine 223, threonine 238, and arginine 302. Histidine 41 (proton donor) is an active-site residue. 298–304 (TTTGRPR) provides a ligand contact to substrate. Residues arginine 304, 330–332 (KLD), and 412–414 (AVG) each bind GTP.

This sequence belongs to the adenylosuccinate synthetase family. Homodimer. The cofactor is Mg(2+).

Its subcellular location is the cytoplasm. It carries out the reaction IMP + L-aspartate + GTP = N(6)-(1,2-dicarboxyethyl)-AMP + GDP + phosphate + 2 H(+). The protein operates within purine metabolism; AMP biosynthesis via de novo pathway; AMP from IMP: step 1/2. Functionally, plays an important role in the de novo pathway of purine nucleotide biosynthesis. Catalyzes the first committed step in the biosynthesis of AMP from IMP. The chain is Adenylosuccinate synthetase from Moorella thermoacetica (strain ATCC 39073 / JCM 9320).